The primary structure comprises 564 residues: Threonine--tRNA ligase (564 aa).

Residues 167-464 (DHRSLGKQLE…LLEKTSGNFP (298 aa)) form a catalytic region. Residues cysteine 260, histidine 311, and histidine 441 each coordinate Zn(2+).

The protein belongs to the class-II aminoacyl-tRNA synthetase family. As to quaternary structure, homodimer. Zn(2+) is required as a cofactor.

The protein resides in the cytoplasm. The catalysed reaction is tRNA(Thr) + L-threonine + ATP = L-threonyl-tRNA(Thr) + AMP + diphosphate + H(+). Its function is as follows. Catalyzes the attachment of threonine to tRNA(Thr) in a two-step reaction: L-threonine is first activated by ATP to form Thr-AMP and then transferred to the acceptor end of tRNA(Thr). Also edits incorrectly charged L-seryl-tRNA(Thr). The polypeptide is Threonine--tRNA ligase (Mycoplasma genitalium (strain ATCC 33530 / DSM 19775 / NCTC 10195 / G37) (Mycoplasmoides genitalium)).